A 154-amino-acid polypeptide reads, in one-letter code: Ribonuclease H (154 aa).

An RNase H type-1 domain is found at 1 to 142 (MTPKLVIYTD…ADELARLGML (142 aa)). The Mg(2+) site is built by Asp10, Glu48, Asp70, and Asp134.

This sequence belongs to the RNase H family. Monomer. Mg(2+) is required as a cofactor.

It is found in the cytoplasm. The catalysed reaction is Endonucleolytic cleavage to 5'-phosphomonoester.. Functionally, endonuclease that specifically degrades the RNA of RNA-DNA hybrids. The chain is Ribonuclease H from Caulobacter sp. (strain K31).